The following is a 188-amino-acid chain: Peptidyl-tRNA hydrolase (188 aa).

TRNA is bound at residue Phe15. Residue His20 is the Proton acceptor of the active site. TRNA-binding residues include Tyr64, Asn66, and Asn112.

It belongs to the PTH family. In terms of assembly, monomer.

Its subcellular location is the cytoplasm. The catalysed reaction is an N-acyl-L-alpha-aminoacyl-tRNA + H2O = an N-acyl-L-amino acid + a tRNA + H(+). Functionally, hydrolyzes ribosome-free peptidyl-tRNAs (with 1 or more amino acids incorporated), which drop off the ribosome during protein synthesis, or as a result of ribosome stalling. In terms of biological role, catalyzes the release of premature peptidyl moieties from peptidyl-tRNA molecules trapped in stalled 50S ribosomal subunits, and thus maintains levels of free tRNAs and 50S ribosomes. This is Peptidyl-tRNA hydrolase from Borrelia turicatae (strain 91E135).